The chain runs to 285 residues: N(G),N(G)-dimethylarginine dimethylaminohydrolase 1 (285 aa).

A2 is subject to N-acetylalanine. L30 serves as a coordination point for substrate. At S33 the chain carries Phosphoserine. Substrate-binding residues include D73, E78, D79, R98, and R145. H173 (proton donor) is an active-site residue. C222 carries the S-nitrosocysteine modification. A substrate-binding site is contributed by V268. C274 bears the S-nitrosocysteine mark. C274 functions as the Nucleophile in the catalytic mechanism. C274 lines the Zn(2+) pocket.

It belongs to the DDAH family. In terms of assembly, monomer. As to expression, detected in red blood cells (at protein level). Widely distributed, high amounts found in kidney, brain, aorta and pancreas.

It carries out the reaction N(omega),N(omega)-dimethyl-L-arginine + H2O = dimethylamine + L-citrulline. The enzyme catalyses N(omega)-methyl-L-arginine + H2O = L-citrulline + methylamine. Its activity is regulated as follows. Inhibited by zinc ions. In terms of biological role, hydrolyzes N(G),N(G)-dimethyl-L-arginine (ADMA) and N(G)-monomethyl-L-arginine (MMA) which act as inhibitors of NOS. Has therefore a role in the regulation of nitric oxide generation. In Rattus norvegicus (Rat), this protein is N(G),N(G)-dimethylarginine dimethylaminohydrolase 1 (Ddah1).